Here is a 733-residue protein sequence, read N- to C-terminus: ATP-dependent RNA helicase DBP7 (733 aa).

Disordered stretches follow at residues 1 to 92 (MDED…SKMI) and 119 to 139 (SSQL…SNAP). Residues 17 to 30 (SVSSGSNKRTTSKV) show a composition bias toward polar residues. Basic and acidic residues predominate over residues 52 to 80 (QKKDRSATGKDDGKKHENDESNDSKKRPT). A Q motif motif is present at residues 144–173 (STFEGLGINERLSKHLTETLRFKNPTKVQK). The 196-residue stretch at 177–372 (PTMLSTERDL…SIILNNPEMI (196 aa)) folds into the Helicase ATP-binding domain. 190 to 197 (AQTGSGKT) serves as a coordination point for ATP. The DEAD box signature appears at 304–307 (DEGD). In terms of domain architecture, Helicase C-terminal spans 406–596 (TLSAILKKIS…NYENYLKDGF (191 aa)). The segment at 687 to 714 (KKLGKSVESNSGIQGASKKTKKEDPRKK) is disordered.

This sequence belongs to the DEAD box helicase family. DDX31/DBP7 subfamily.

It is found in the nucleus. Its subcellular location is the nucleolus. It carries out the reaction ATP + H2O = ADP + phosphate + H(+). ATP-binding RNA helicase involved in the biogenesis of 60S ribosomal subunits and is required for the normal formation of 25S and 5.8S rRNAs. The protein is ATP-dependent RNA helicase DBP7 (DPB7) of Scheffersomyces stipitis (strain ATCC 58785 / CBS 6054 / NBRC 10063 / NRRL Y-11545) (Yeast).